The following is a 302-amino-acid chain: MAARNGGTIIDGKAFASGVRGRVASAVAGLEAAHGVVPGLAVVLVGEDPASQVYVRNKGIQTREAGMASFEHKLPAETAQAELMALIERLNADPAVHGILVQLPLPRHMDAEAVINAIDPKKDVDGFHVLNVGLLGTGQKAMVPCTPLGCLMLLRDTLGDLSGLNAVVVGRSNIVGKPMAQLLLNESCTVTIAHSRTRDLAGLCRTADILVAAVGRPRMIRGDWIKPGATVIDVGINRIEEAGRSRLVGDVDFDSAAPVAGAITPVPGGVGPMTIACLLANTLTACCRANGLPEPDFAEAGG.

Residues 170–172 (GRS), serine 195, and isoleucine 236 contribute to the NADP(+) site.

The protein belongs to the tetrahydrofolate dehydrogenase/cyclohydrolase family. As to quaternary structure, homodimer.

It catalyses the reaction (6R)-5,10-methylene-5,6,7,8-tetrahydrofolate + NADP(+) = (6R)-5,10-methenyltetrahydrofolate + NADPH. It carries out the reaction (6R)-5,10-methenyltetrahydrofolate + H2O = (6R)-10-formyltetrahydrofolate + H(+). Its pathway is one-carbon metabolism; tetrahydrofolate interconversion. Functionally, catalyzes the oxidation of 5,10-methylenetetrahydrofolate to 5,10-methenyltetrahydrofolate and then the hydrolysis of 5,10-methenyltetrahydrofolate to 10-formyltetrahydrofolate. This is Bifunctional protein FolD 2 from Paracoccus denitrificans (strain Pd 1222).